Reading from the N-terminus, the 68-residue chain is Phycobilisome 7.8 kDa linker polypeptide, allophycocyanin-associated, core (68 aa).

Residues 2 to 57 form the CpcD-like domain; that stretch reads ARLFKVTACVPSQTRIRTQRELQNTYFTKLVPFENWFREQQRIMKMGGKIVKVELA.

This sequence belongs to the phycobilisome linker protein family.

The protein resides in the cellular thylakoid membrane. Its function is as follows. Rod linker protein, associated with allophycocyanin. Linker polypeptides determine the state of aggregation and the location of the disk-shaped phycobiliprotein units within the phycobilisome and modulate their spectroscopic properties in order to mediate a directed and optimal energy transfer. The polypeptide is Phycobilisome 7.8 kDa linker polypeptide, allophycocyanin-associated, core (apcC) (Microchaete diplosiphon (Fremyella diplosiphon)).